We begin with the raw amino-acid sequence, 862 residues long: MSQNEHCQDSGEYFSAGTQGYFKNNMEDNLEVREDSLGDEVFDTVNSSIVSGESIRFFVNVNLEVQPSKSDLEAATGGCVLLHTSRKYLKLKNFEEEVRAHRDLDGFLAQASIILNETATSLDDVLRTMLNRFALDPNHAEPDCDLDLLMAKLFTDAGAPMESKVHLLSDTIQGVTATVRGVQYEQSWLCIICTMKTLQKRHVCISRLVRPQNWGENSCEVRFVILVLAPPKMKSTKTAMEVARTFATMFSDITFRQKLLKTRTEEEFKEALVHQRQLLTMMMPRAAGHSMSSLHTHRHPQPPKCKDFFPFGKGIWMDIMRRFPVYPMDFTDGIIGKSKSVGKYVTTTLFLYFACLLPTIAFGSLNDENTNGAIDVQKTIAGQSIGGLLYALFSGQPLVILLTTAPLAIYTQVIRVICDDYNLDFNAFYAWTGLWNSFFLALYAFLNLSLLMNLFKRSTEEIIALFISITFVLDAVKGMVKIFGKYYYGHHYHTKRTSSLVSLLGIGRSPNSSLHTALNASLLASPVEMATTSSPGSTHSGQATAVLSLLIMLGTLWLGYTLYQFKKSPYLHPCVRETLSDCALPIAVLSFSLIGSYGFQEIEMSKFRYNPSESLFEVAQIHSLSFKAIGSAMGLGFLLSLLFFIEQNLVAALVNAPENRLVKGTAYHWDLLLLAIINTGLSLFGLPWIHAAYPHSPLHVRALALVEERVENGHIYETIVDVKETRLTALGASVLVGLSLLLLPFPLQWIPKPVLYGLFLYIALTSLDGNQLFSRVALLLKEQTSYPPTHYIRRVPQRKIHYFTGLQILQLLLLCAFGMSSLPYMKMVFPLIMIAMIPIRYNLLPRIIEAKYLDVMDAEHRP.

At 1–343 (MSQNEHCQDS…IIGKSKSVGK (343 aa)) the chain is on the cytoplasmic side. Residues 344–366 (YVTTTLFLYFACLLPTIAFGSLN) traverse the membrane as a helical segment. Residues 367-379 (DENTNGAIDVQKT) are Extracellular-facing. The chain crosses the membrane as a helical span at residues 380–393 (IAGQSIGGLLYALF). Topologically, residues 394–398 (SGQPL) are cytoplasmic. The chain crosses the membrane as a helical span at residues 399–415 (VILLTTAPLAIYTQVIR). Topologically, residues 416 to 428 (VICDDYNLDFNAF) are extracellular. Residues 429 to 452 (YAWTGLWNSFFLALYAFLNLSLLM) traverse the membrane as a helical segment. Over 453-460 (NLFKRSTE) the chain is Cytoplasmic. Residues 461 to 481 (EIIALFISITFVLDAVKGMVK) form a helical membrane-spanning segment. Over 482–542 (IFGKYYYGHH…SSPGSTHSGQ (61 aa)) the chain is Extracellular. Residues N511 and N519 are each glycosylated (N-linked (GlcNAc...) asparagine). Residues 543 to 564 (ATAVLSLLIMLGTLWLGYTLYQ) traverse the membrane as a helical segment. Topologically, residues 565–577 (FKKSPYLHPCVRE) are cytoplasmic. A helical membrane pass occupies residues 578 to 599 (TLSDCALPIAVLSFSLIGSYGF). The Extracellular portion of the chain corresponds to 600–627 (QEIEMSKFRYNPSESLFEVAQIHSLSFK). A helical membrane pass occupies residues 628–645 (AIGSAMGLGFLLSLLFFI). The Cytoplasmic segment spans residues 646 to 670 (EQNLVAALVNAPENRLVKGTAYHWD). Residues 671 to 691 (LLLLAIINTGLSLFGLPWIHA) traverse the membrane as a helical segment. Residues 692–721 (AYPHSPLHVRALALVEERVENGHIYETIVD) are Extracellular-facing. The chain crosses the membrane as a helical span at residues 722 to 746 (VKETRLTALGASVLVGLSLLLLPFP). The Cytoplasmic portion of the chain corresponds to 747 to 752 (LQWIPK). The helical transmembrane segment at 753–770 (PVLYGLFLYIALTSLDGN) threads the bilayer. Residues 771-774 (QLFS) are Extracellular-facing. Residues 775–797 (RVALLLKEQTSYPPTHYIRRVPQ) traverse the membrane as a helical segment. The Cytoplasmic segment spans residues 798–802 (RKIHY). The chain crosses the membrane as a helical span at residues 803–819 (FTGLQILQLLLLCAFGM). Over 820-823 (SSLP) the chain is Extracellular. The helical transmembrane segment at 824–844 (YMKMVFPLIMIAMIPIRYNLL) threads the bilayer. Residues 845 to 862 (PRIIEAKYLDVMDAEHRP) are Cytoplasmic-facing.

Belongs to the anion exchanger (TC 2.A.31) family. In terms of assembly, homodimer. Post-translationally, glycosylated. As to expression, expressed in the endothelial cells of the cornea. In the inner ear, is located in fibrocytes underlying the stria vascularis. In the kidney, is expressed in the thin descending limb of Henle loop.

The protein localises to the cell membrane. The protein resides in the basolateral cell membrane. It catalyses the reaction tetrahydroxoborate(in) + 2 Na(+)(in) = tetrahydroxoborate(out) + 2 Na(+)(out). Its function is as follows. Multifunctional transporter with an impact in cell morphology and differentiation. In the presence of borate B(OH)4(-), acts as a voltage-dependent electrogenic Na(+)-coupled B(OH)4(-) cotransporter controlling boron homeostasis. At early stages of stem cell differentiation, participates in synergy with ITGA5-ITGB1 and ITGAV-ITGB3 integrins and BMPR1A to promote cell adhesion and contractility that drives differentiation toward osteogenic commitment while inhibiting adipogenesis. In the absence of B(OH)4(-), acts as a Na(+)-coupled OH(-) or H(+) permeable channel with implications in cellular redox balance. Regulates the oxidative stress response in corneal endothelium by enhancing antioxidant defenses and protecting cells from reactive oxygen species. In response to hypo-osmotic challenge, also acts as water permeable channel at the basolateral cell membrane of corneal endothelial cells and facilitates transendothelial fluid reabsorption in the aqueous humor. In the presence of ammonia, acts as an electrogenic NH3/H(+) cotransporter and may play a role in ammonia transport and reabsorption in renal Henle's loop epithelium. The protein is Solute carrier family 4 member 11 (Slc4a11) of Mus musculus (Mouse).